The chain runs to 427 residues: Peptidase B (427 aa).

K195 and D200 together coordinate Mn(2+). Residue K207 is part of the active site. Positions 218, 277, and 279 each coordinate Mn(2+). Residue R281 is part of the active site.

This sequence belongs to the peptidase M17 family. As to quaternary structure, homohexamer. Mn(2+) serves as cofactor.

It is found in the cytoplasm. It carries out the reaction Release of an N-terminal amino acid, Xaa, from a peptide or arylamide. Xaa is preferably Glu or Asp but may be other amino acids, including Leu, Met, His, Cys and Gln.. Probably plays an important role in intracellular peptide degradation. The sequence is that of Peptidase B from Escherichia coli (strain UTI89 / UPEC).